Reading from the N-terminus, the 188-residue chain is Grand meiotic recombination cluster protein 2 (188 aa).

2 stretches are compositionally biased toward polar residues: residues 1-13 and 21-31; these read MSDTTEVPRQSSE and ERTNSLKSPDV. The disordered stretch occupies residues 1–31; the sequence is MSDTTEVPRQSSENDQDNNLERTNSLKSPDV.

In terms of biological role, probable transcriptional activator involved in meiotic prophase and synaptonemal complex (SC) assembly. This chain is Grand meiotic recombination cluster protein 2 (GMC2), found in Saccharomyces cerevisiae (strain ATCC 204508 / S288c) (Baker's yeast).